Here is a 335-residue protein sequence, read N- to C-terminus: Phosphatidylcholine:ceramide cholinephosphotransferase 2 (335 aa).

5 helical membrane passes run 60–80 (LTAF…LTVI), 104–124 (WSVG…IIFL), 136–156 (FLLG…TFLP), 200–220 (ILCG…MYFV), and 229–249 (LVIL…ALVV). His210 is an active-site residue. Catalysis depends on residues His253 and Asp257. Residues 258–278 (VLIAYWLTSHVFWSYHQIFEM) form a helical membrane-spanning segment. Residues 279 to 335 (RKDDRPQAPLSRLWWFWLCYWFESDVADGKLVNKWNWPLEGPQRMHTIMNRINYKLQ) lie on the Cytoplasmic side of the membrane.

The protein belongs to the sphingomyelin synthase family.

It is found in the membrane. The catalysed reaction is an N-acylsphing-4-enine + a 1,2-diacyl-sn-glycero-3-phosphocholine = a sphingomyelin + a 1,2-diacyl-sn-glycerol. It catalyses the reaction an N-acyl-15-methylhexadecasphing-4-enine + a 1,2-diacyl-sn-glycero-3-phosphocholine = an N-acyl-15-methylhexadecasphing-4-enine-1-phosphocholine + a 1,2-diacyl-sn-glycerol. It participates in lipid metabolism; sphingolipid metabolism. In terms of biological role, sphingomyelin synthases (SM synthase or SMS) synthesize the sphingolipid sphingomyelin (SM) through transfer of the phosphatidyl head group of 1,2-diacyl-sn-glycero-3-phosphocholine (phosphatidylcholine, PC) on to the primary hydroxyl of ceramide (N-acylsphingoid base), yielding 1,2-diacyl-sn-glycerol (diacylglycerol, DAG) as a side product. Functions as a bidirectional lipid cholinephosphotransferases capable of converting PC and ceramide to SM and DAG and vice versa depending on the respective levels of ceramide and DAG as phosphocholine acceptors, respectively. The protein is Phosphatidylcholine:ceramide cholinephosphotransferase 2 (sms-2) of Caenorhabditis elegans.